Here is a 449-residue protein sequence, read N- to C-terminus: 23S rRNA (uracil(1939)-C(5))-methyltransferase RlmD (449 aa).

The 66-residue stretch at 1–66 folds into the TRAM domain; that stretch reads MGRSRHHNKL…AKFDEAKVVE (66 aa). [4Fe-4S] cluster-binding residues include Cys79, Cys85, Cys88, and Cys169. 6 residues coordinate S-adenosyl-L-methionine: Gln280, Phe309, Asn314, Glu330, Asn357, and Asp379. Cys405 (nucleophile) is an active-site residue.

It belongs to the class I-like SAM-binding methyltransferase superfamily. RNA M5U methyltransferase family. RlmD subfamily.

The catalysed reaction is uridine(1939) in 23S rRNA + S-adenosyl-L-methionine = 5-methyluridine(1939) in 23S rRNA + S-adenosyl-L-homocysteine + H(+). Functionally, catalyzes the formation of 5-methyl-uridine at position 1939 (m5U1939) in 23S rRNA. This is 23S rRNA (uracil(1939)-C(5))-methyltransferase RlmD from Francisella tularensis subsp. novicida (strain U112).